The following is a 477-amino-acid chain: Alkaline phosphatase (477 aa).

Asp44 lines the Mg(2+) pocket. Asp44 provides a ligand contact to Zn(2+). Ser94 (phosphoserine intermediate) is an active-site residue. Asn124 carries N-linked (GlcNAc...) asparagine glycosylation. 2 residues coordinate Mg(2+): His155 and Thr157. The cysteines at positions 165 and 185 are disulfide-linked. Asn214 carries an N-linked (GlcNAc...) asparagine glycan. A Mg(2+)-binding site is contributed by Glu315. Zn(2+) contacts are provided by Asp320, His324, Asp361, and His362. Residue Asn413 is glycosylated (N-linked (GlcNAc...) asparagine). His437 contributes to the Zn(2+) binding site.

Homodimer. Mg(2+) is required as a cofactor. Zn(2+) serves as cofactor.

It is found in the cell membrane. The enzyme catalyses a phosphate monoester + H2O = an alcohol + phosphate. The polypeptide is Alkaline phosphatase (Gadus morhua (Atlantic cod)).